The primary structure comprises 509 residues: Dihydrolipoyl dehydrogenase, mitochondrial (509 aa).

The transit peptide at methionine 1–tyrosine 35 directs the protein to the mitochondrion. At lysine 66 the chain carries N6-acetyllysine; alternate. An N6-succinyllysine; alternate modification is found at lysine 66. Residues glutamate 71–cysteine 80 and lysine 89 each bind FAD. The cysteines at positions 80 and 85 are disulfide-linked. N6-acetyllysine; alternate occurs at positions 122, 132, and 143. 3 positions are modified to N6-succinyllysine; alternate: lysine 122, lysine 132, and lysine 143. Glycine 154 is a binding site for FAD. Residues lysine 159 and lysine 166 each carry the N6-succinyllysine modification. Threonine 183–serine 185 contributes to the FAD binding site. NAD(+) contacts are provided by residues glycine 220 to glutamate 227 and glutamate 243. Lysine 273 and lysine 277 each carry N6-succinyllysine. An NAD(+)-binding site is contributed by valine 278. 2 positions are modified to phosphoserine: serine 285 and serine 297. Glycine 314 is an NAD(+) binding site. Lysine 346 bears the N6-acetyllysine mark. FAD-binding positions include aspartate 355 and methionine 361–histidine 364. Residue lysine 410 is modified to N6-acetyllysine; alternate. Lysine 410 carries the N6-succinyllysine; alternate modification. An N6-acetyllysine mark is found at lysine 417 and lysine 420. Lysine 430 is subject to N6-succinyllysine. The Proton acceptor role is filled by histidine 487. Serine 502 carries the phosphoserine modification. Position 505 is an N6-acetyllysine; alternate (lysine 505). Lysine 505 is subject to N6-succinyllysine; alternate.

It belongs to the class-I pyridine nucleotide-disulfide oxidoreductase family. Homodimer. Part of the multimeric pyruvate dehydrogenase complex that contains multiple copies of pyruvate dehydrogenase (subunits PDHA (PDHA1 or PDHA2) and PDHB, E1), dihydrolipoamide acetyltransferase (DLAT, E2) and lipoamide dehydrogenase (DLD, E3). These subunits are bound to an inner core composed of about 48 DLAT and 12 PDHX molecules (by non covalent bonds). The 2-oxoglutarate dehydrogenase complex is composed of OGDH (2-oxoglutarate dehydrogenase; E1), DLST (dihydrolipoamide succinyltransferase; E2), DLD (dihydrolipoamide dehydrogenase; E3) and the assembly factor KGD4. It contains multiple copies of the three enzymatic components (E1, E2 and E3). In the nucleus, the 2-oxoglutarate dehydrogenase complex associates with KAT2A. Interacts with PDHX. FAD is required as a cofactor. Post-translationally, tyrosine phosphorylated.

Its subcellular location is the mitochondrion matrix. The protein localises to the nucleus. It localises to the cell projection. The protein resides in the cilium. It is found in the flagellum. Its subcellular location is the cytoplasmic vesicle. The protein localises to the secretory vesicle. It localises to the acrosome. The enzyme catalyses N(6)-[(R)-dihydrolipoyl]-L-lysyl-[protein] + NAD(+) = N(6)-[(R)-lipoyl]-L-lysyl-[protein] + NADH + H(+). In terms of biological role, lipoamide dehydrogenase is a component of the glycine cleavage system as well as an E3 component of three alpha-ketoacid dehydrogenase complexes (pyruvate-, alpha-ketoglutarate-, and branched-chain amino acid-dehydrogenase complex). The 2-oxoglutarate dehydrogenase complex is mainly active in the mitochondrion. A fraction of the 2-oxoglutarate dehydrogenase complex also localizes in the nucleus and is required for lysine succinylation of histones: associates with KAT2A on chromatin and provides succinyl-CoA to histone succinyltransferase KAT2A. In monomeric form may have additional moonlighting function as serine protease. Involved in the hyperactivation of spermatazoa during capacitation and in the spermatazoal acrosome reaction. This is Dihydrolipoyl dehydrogenase, mitochondrial (DLD) from Cricetulus griseus (Chinese hamster).